We begin with the raw amino-acid sequence, 277 residues long: MARSSIEQLTSFLKSVNGRAKKALSQNFLVDGNILRKILATADVQPGDWVLEIGPGFGALSEVLVSQGANVIALEKDPMFEESLSQLPIDIEITDACKYPLASLDDKGWKGKGRIVANLPYHITTPLLTKFFLECPNRWKTVTVMIQDEVARRITANPGDKDYSSLTVFLRFFADVQYAFKVSPNCFYPKPSVSSAVVHMRVHEDFPLSGSEIDEFFALTRAAFGQRRKLLANSLKNLYPKDKVFQVLEHLGFSEKTRPETISLEEYLKIFRLLKDF.

Positions 27, 29, 54, 75, 95, and 118 each coordinate S-adenosyl-L-methionine.

It belongs to the class I-like SAM-binding methyltransferase superfamily. rRNA adenine N(6)-methyltransferase family. RsmA subfamily.

It localises to the cytoplasm. It catalyses the reaction adenosine(1518)/adenosine(1519) in 16S rRNA + 4 S-adenosyl-L-methionine = N(6)-dimethyladenosine(1518)/N(6)-dimethyladenosine(1519) in 16S rRNA + 4 S-adenosyl-L-homocysteine + 4 H(+). Specifically dimethylates two adjacent adenosines (A1518 and A1519) in the loop of a conserved hairpin near the 3'-end of 16S rRNA in the 30S particle. May play a critical role in biogenesis of 30S subunits. This chain is Ribosomal RNA small subunit methyltransferase A, found in Chlamydia muridarum (strain MoPn / Nigg).